Consider the following 549-residue polypeptide: Glucose-6-phosphate isomerase (549 aa).

The active-site Proton donor is E355. Active-site residues include H386 and K514.

It belongs to the GPI family.

It localises to the cytoplasm. It catalyses the reaction alpha-D-glucose 6-phosphate = beta-D-fructose 6-phosphate. The protein operates within carbohydrate biosynthesis; gluconeogenesis. Its pathway is carbohydrate degradation; glycolysis; D-glyceraldehyde 3-phosphate and glycerone phosphate from D-glucose: step 2/4. Catalyzes the reversible isomerization of glucose-6-phosphate to fructose-6-phosphate. This chain is Glucose-6-phosphate isomerase, found in Edwardsiella ictaluri (strain 93-146).